Here is a 276-residue protein sequence, read N- to C-terminus: Phosphate import ATP-binding protein PstB 2 (276 aa).

The 241-residue stretch at Met22–Val262 folds into the ABC transporter domain. Position 54–61 (Gly54–Thr61) interacts with ATP.

It belongs to the ABC transporter superfamily. Phosphate importer (TC 3.A.1.7) family. In terms of assembly, the complex is composed of two ATP-binding proteins (PstB), two transmembrane proteins (PstC and PstA) and a solute-binding protein (PstS).

The protein resides in the cell membrane. It carries out the reaction phosphate(out) + ATP + H2O = ADP + 2 phosphate(in) + H(+). Functionally, part of the ABC transporter complex PstSACB involved in phosphate import. Responsible for energy coupling to the transport system. The polypeptide is Phosphate import ATP-binding protein PstB 2 (Mycobacterium bovis (strain ATCC BAA-935 / AF2122/97)).